We begin with the raw amino-acid sequence, 120 residues long: MLATSNRFERRKRRVRLKLKNNLSLLRLSIFKSNRHFYVQLIDDSCGKTYAAASTLEREVIALAHRRVNSNSVKIVAKLMSERLNKLDNCKKFVFDRGPYKYIGVVAEFANELRSYGFEF.

The protein belongs to the universal ribosomal protein uL18 family. In terms of assembly, part of the 50S ribosomal subunit; part of the 5S rRNA/L5/L18/L25 subcomplex. Contacts the 5S and 23S rRNAs.

Its function is as follows. This is one of the proteins that bind and probably mediate the attachment of the 5S RNA into the large ribosomal subunit, where it forms part of the central protuberance. This chain is Large ribosomal subunit protein uL18, found in Ehrlichia ruminantium (strain Gardel).